Consider the following 21-residue polypeptide: Putative NADH dehydrogenase subunit PS9 (21 aa).

This Pinus strobus (Eastern white pine) protein is Putative NADH dehydrogenase subunit PS9.